A 522-amino-acid polypeptide reads, in one-letter code: Sorting nexin-1 (522 aa).

Residues 1–144 (MASGGGGCSA…EEEEQEDQFD (144 aa)) form a disordered region. Serine 32 and serine 39 each carry phosphoserine. A compositionally biased stretch (acidic residues) spans 35 to 45 (EAGDSDTEGED). Residues threonine 41 and threonine 48 each carry the phosphothreonine modification. Residues 55–65 (KPQSPKKTTSL) show a composition bias toward polar residues. Serine 58 and serine 72 each carry phosphoserine. Residues 71–80 (GSKENGIHED) are compositionally biased toward basic and acidic residues. Over residues 98-125 (LDSTQNNQKTMPGKTLTSHSPQEATNSP) the composition is skewed to polar residues. Positions 132–143 (EELEEEEQEDQF) are enriched in acidic residues. In terms of domain architecture, PX spans 143–272 (FDLTVGITDP…EFLEKEELPR (130 aa)). A 1,2-diacyl-sn-glycero-3-phospho-(1D-myo-inositol-3-phosphate) is bound by residues arginine 186, serine 188, and lysine 214. Serine 188 carries the post-translational modification Phosphoserine. Residue lysine 237 is modified to N6-acetyllysine. Arginine 238 is an a 1,2-diacyl-sn-glycero-3-phospho-(1D-myo-inositol-3-phosphate) binding site. Residue serine 280 is modified to Phosphoserine. Residues 281–298 (GAGLLKMFNKATDAVSKM) form a membrane-binding amphipathic helix region. Residues 302–522 (MNESDIWFEE…AFLPEAKAIS (221 aa)) enclose the BAR domain.

This sequence belongs to the sorting nexin family. Predominantly forms heterodimers with BAR domain-containing sorting nexins SNX5, SNX6 and SNX32. Can self-associate to form homodimers. The heterodimers are proposed to self-assemble into helical arrays on the membrane to stabilize and expand local membrane curvature underlying endosomal tubule formation. Thought to be a component of the originally described retromer complex (also called SNX-BAR retromer) which is a pentamer containing the heterotrimeric retromer cargo-selective complex (CSC), also described as vacuolar protein sorting subcomplex (VPS) and a heterodimeric membrane-deforming subcomplex formed between SNX1 or SNX2 and SNX5 or SNX6 (also called SNX-BAR subcomplex); the respective CSC and SNX-BAR subcomplexes associate with low affinity. Interacts with SNX5, SNX6, SNX32, VPS26A, VPS29, VPS35, DRD5, DENND5A, KALRN, RHOG (GDP-bound form). The interaction with SNX2 is reported controversially. Interacts with DNAJC13; prevented by presence of HGS. Interacts with HGS.

The protein resides in the endosome membrane. It is found in the golgi apparatus. The protein localises to the trans-Golgi network membrane. Its subcellular location is the early endosome membrane. It localises to the cell projection. The protein resides in the lamellipodium. In terms of biological role, involved in several stages of intracellular trafficking. Interacts with membranes containing phosphatidylinositol 3-phosphate (PtdIns(3P)) or phosphatidylinositol 3,5-bisphosphate (PtdIns(3,5)P2). Acts in part as component of the retromer membrane-deforming SNX-BAR subcomplex. The SNX-BAR retromer mediates retrograde transport of cargo proteins from endosomes to the trans-Golgi network (TGN) and is involved in endosome-to-plasma membrane transport for cargo protein recycling. The SNX-BAR subcomplex functions to deform the donor membrane into a tubular profile called endosome-to-TGN transport carrier (ETC). Can sense membrane curvature and has in vitro vesicle-to-membrane remodeling activity. Involved in retrograde endosome-to-TGN transport of lysosomal enzyme receptors (IGF2R, M6PR and SORT1). Plays a role in targeting ligand-activated EGFR to the lysosomes for degradation after endocytosis from the cell surface and release from the Golgi. Involvement in retromer-independent endocytic trafficking of P2RY1 and lysosomal degradation of protease-activated receptor-1/F2R. Promotes KALRN- and RHOG-dependent but retromer-independent membrane remodeling such as lamellipodium formation; the function is dependent on GEF activity of KALRN. Required for endocytosis of DRD5 upon agonist stimulation but not for basal receptor trafficking. The sequence is that of Sorting nexin-1 (Snx1) from Mus musculus (Mouse).